We begin with the raw amino-acid sequence, 95 residues long: Protein GOLVEN 9 (95 aa).

A signal peptide spans 1 to 24 (MKKTSLKLMTLVLGFCFVIYLLQG). Positions 25-73 (PRGGSRNGDLLIARKLISLEPIETKNAARSLKDSISTDLEEEVDRLMEH) are excised as a propeptide. Residues 72–95 (EHEYPSPVKPRKRTPVHNGVRNRH) are disordered. Tyr75 carries the post-translational modification Sulfotyrosine. Residues 80-95 (KPRKRTPVHNGVRNRH) are compositionally biased toward basic residues. At Pro86 the chain carries Hydroxyproline. Residues 90 to 95 (GVRNRH) constitute a propeptide that is removed on maturation.

This sequence belongs to the RGF family. In terms of assembly, binds to LRR receptor-like serine/threonine-protein kinases to trigger their dimerization with SERK proteins and subsequent signaling. As to expression, expressed in roots.

The protein localises to the secreted. Signaling peptide (root growth factor) required during root gravitropism in a PIN2-traffic dependent manner. Regulates the pattern of root growth and lateral root development by modulating the length and the number of cortical cells in the root apical meristem (RAM), and the anticlinal asymmetric cell divisions in lateral root initiation cells. This is Protein GOLVEN 9 from Arabidopsis thaliana (Mouse-ear cress).